The chain runs to 276 residues: 3-keto-5-aminohexanoate cleavage enzyme (276 aa).

Glu-14 contributes to the (5S)-5-amino-3-oxohexanoate binding site. Residues His-46 and His-48 each coordinate Zn(2+). (5S)-5-amino-3-oxohexanoate-binding residues include Ser-82, Gly-85, Thr-106, and Asn-108. Position 230 (Glu-230) interacts with Zn(2+).

Belongs to the BKACE family. Kce subfamily. In terms of assembly, homotetramer. The cofactor is Zn(2+).

It carries out the reaction (5S)-5-amino-3-oxohexanoate + acetyl-CoA = (3S)-3-aminobutanoyl-CoA + acetoacetate. Its pathway is amino-acid degradation; L-lysine degradation via acetate pathway. Its function is as follows. Involved in the anaerobic fermentation of lysine. Catalyzes the reversible reaction between 3-keto-5-aminohexanoate (KAH) and acetyl-CoA to form 3-aminobutyryl-CoA and acetoacetate. The reaction involves the deprotonation of KAH, the nucleophilic addition onto acetyl-CoA and the intramolecular transfer of the CoA moiety. This is 3-keto-5-aminohexanoate cleavage enzyme from Cloacimonas acidaminovorans (strain Evry).